The sequence spans 294 residues: Eukaryotic translation initiation factor 3 subunit F (294 aa).

In terms of domain architecture, MPN spans 7–155; it reads VNVHPGVYMN…VRAYLRSKAG (149 aa).

This sequence belongs to the eIF-3 subunit F family. As to quaternary structure, component of the eukaryotic translation initiation factor 3 (eIF-3) complex.

The protein resides in the cytoplasm. In terms of biological role, component of the eukaryotic translation initiation factor 3 (eIF-3) complex, which is involved in protein synthesis of a specialized repertoire of mRNAs and, together with other initiation factors, stimulates binding of mRNA and methionyl-tRNAi to the 40S ribosome. The eIF-3 complex specifically targets and initiates translation of a subset of mRNAs involved in cell proliferation. The sequence is that of Eukaryotic translation initiation factor 3 subunit F from Caenorhabditis elegans.